The sequence spans 142 residues: Phosphoribosyl-AMP cyclohydrolase (142 aa).

D92 is a binding site for Mg(2+). C93 contacts Zn(2+). Mg(2+)-binding residues include D94 and D96. 2 residues coordinate Zn(2+): C109 and C116.

Belongs to the PRA-CH family. In terms of assembly, homodimer. Mg(2+) serves as cofactor. Requires Zn(2+) as cofactor.

It is found in the cytoplasm. It catalyses the reaction 1-(5-phospho-beta-D-ribosyl)-5'-AMP + H2O = 1-(5-phospho-beta-D-ribosyl)-5-[(5-phospho-beta-D-ribosylamino)methylideneamino]imidazole-4-carboxamide. The protein operates within amino-acid biosynthesis; L-histidine biosynthesis; L-histidine from 5-phospho-alpha-D-ribose 1-diphosphate: step 3/9. In terms of biological role, catalyzes the hydrolysis of the adenine ring of phosphoribosyl-AMP. This chain is Phosphoribosyl-AMP cyclohydrolase, found in Alkalilimnicola ehrlichii (strain ATCC BAA-1101 / DSM 17681 / MLHE-1).